The following is a 170-amino-acid chain: Protein-lysine myristoyltransferase HlyC (170 aa).

The active site involves His23. His151 contributes to the heme binding site.

This sequence belongs to the RTX toxin acyltransferase family. Monomer. Post-translationally, proteolytically cleaved by the protease systems ClpAP, ClpXP and FtsH, leading to its degradation.

Its subcellular location is the cytoplasm. The catalysed reaction is tetradecanoyl-[ACP] + L-lysyl-[protein] = N(6)-tetradecanoyl-L-lysyl-[protein] + holo-[ACP] + H(+). With respect to regulation, the acyltransferase activity is inhibited by heme. Protein-lysine myristoyltransferase that catalyzes myristoylation of the protoxin (HlyA) at two internal lysine residues, thereby converting it to the active toxin. The polypeptide is Protein-lysine myristoyltransferase HlyC (Escherichia coli).